The sequence spans 149 residues: D-aminoacyl-tRNA deacylase (149 aa).

The Gly-cisPro motif, important for rejection of L-amino acids motif lies at 137 to 138 (GP).

This sequence belongs to the DTD family. In terms of assembly, homodimer.

The protein resides in the cytoplasm. It carries out the reaction glycyl-tRNA(Ala) + H2O = tRNA(Ala) + glycine + H(+). The catalysed reaction is a D-aminoacyl-tRNA + H2O = a tRNA + a D-alpha-amino acid + H(+). Its function is as follows. An aminoacyl-tRNA editing enzyme that deacylates mischarged D-aminoacyl-tRNAs. Also deacylates mischarged glycyl-tRNA(Ala), protecting cells against glycine mischarging by AlaRS. Acts via tRNA-based rather than protein-based catalysis; rejects L-amino acids rather than detecting D-amino acids in the active site. By recycling D-aminoacyl-tRNA to D-amino acids and free tRNA molecules, this enzyme counteracts the toxicity associated with the formation of D-aminoacyl-tRNA entities in vivo and helps enforce protein L-homochirality. This chain is D-aminoacyl-tRNA deacylase, found in Desulforamulus reducens (strain ATCC BAA-1160 / DSM 100696 / MI-1) (Desulfotomaculum reducens).